The sequence spans 195 residues: Translation initiation factor IF-3 (195 aa).

The tract at residues 158–195 is disordered; the sequence is EQSEVQQRPKREGRNMIMFLSPRKTPLIKKEEDAKENN. Over residues 185-195 the composition is skewed to basic and acidic residues; that stretch reads IKKEEDAKENN.

Belongs to the IF-3 family. In terms of assembly, monomer.

The protein resides in the cytoplasm. Functionally, IF-3 binds to the 30S ribosomal subunit and shifts the equilibrium between 70S ribosomes and their 50S and 30S subunits in favor of the free subunits, thus enhancing the availability of 30S subunits on which protein synthesis initiation begins. The chain is Translation initiation factor IF-3 from Prochlorococcus marinus (strain MIT 9515).